The chain runs to 687 residues: MPNLKRLPIPPLQDTLNRYLARVEPLQDERQNRRTRRTVLSAENLDALNTLHERLLEYDARLAESNPESSYIEQFWYDAYLLYDATVVLNVNPYFQLQDDPTIKDTPETAAQGPYGAHTVQVRRAARLTTSILKFIRQIRHGTLRTDTVRGKTPLSMDQYERLFGSSRIPPGPGEPSCHLQTDATSHHVVAMYRGQFYWFDVLDTRNEPIFATPEQLEWNLYSIIMDAESAGSGSAPFGVFTTESRRVWSNIRDYLFHADDCTNWRNLKLIDSALFVVCLDDVAFAADQQDELTRSMLCGTSTINLDPHQHQPPLNVQTGTCLNRWYDKLQLIVTKNGKAGINFEHTGVDGHTVLRLATDIYTDSILSFARGVTKNVVDIFSDDDGKPSSSSLASAAHSANLITIPRKLEWRTDNFLQSSLHFAETRISDLISQYEFVNLDFSNYGASHIKTVFKCSPDAFVQQVFQVAYFALYGRFETVYEPAMTKAFQNGRTEAIRSVTGQSKLFVKSLLDQDASDATKIQLLHDACTAHSQITRECSQGLGQDRHLYALYCLWNQWYKDKLELPPIFRDKSWTTMQNNVLSTSNCGNPCLKSFGFGPVTANGFGIGYIIRDHSVSVVVSSRHRQTARFASLMEKSLLEIDRIFKRQQARAAKPAARTTASANTKSEDMKYLLSGYDYFDVSVSG.

His346 (proton acceptor) is an active-site residue. Residue 446–459 (GASHIKTVFKCSPD) coordinates CoA. Residues Tyr481 and Thr494 each coordinate (R)-carnitine. Ser517 is subject to Phosphoserine.

This sequence belongs to the carnitine/choline acetyltransferase family.

Its subcellular location is the mitochondrion inner membrane. The catalysed reaction is (R)-carnitine + acetyl-CoA = O-acetyl-(R)-carnitine + CoA. Its function is as follows. Involved in the transfer of acetyl-CoA into mitochondria. May also be involved in the metabolism of acetate and of ethanol. The chain is Putative mitochondrial carnitine O-acetyltransferase (YAT1) from Saccharomyces cerevisiae (strain ATCC 204508 / S288c) (Baker's yeast).